Consider the following 325-residue polypeptide: Beta-ketoacyl-[acyl-carrier-protein] synthase III (325 aa).

Catalysis depends on residues cysteine 112 and histidine 250. Residues glutamine 251–arginine 255 are ACP-binding. The active site involves asparagine 280.

This sequence belongs to the thiolase-like superfamily. FabH family. As to quaternary structure, homodimer.

Its subcellular location is the cytoplasm. It catalyses the reaction malonyl-[ACP] + acetyl-CoA + H(+) = 3-oxobutanoyl-[ACP] + CO2 + CoA. It participates in lipid metabolism; fatty acid biosynthesis. Functionally, catalyzes the condensation reaction of fatty acid synthesis by the addition to an acyl acceptor of two carbons from malonyl-ACP. Catalyzes the first condensation reaction which initiates fatty acid synthesis and may therefore play a role in governing the total rate of fatty acid production. Possesses both acetoacetyl-ACP synthase and acetyl transacylase activities. Its substrate specificity determines the biosynthesis of branched-chain and/or straight-chain of fatty acids. The polypeptide is Beta-ketoacyl-[acyl-carrier-protein] synthase III (Clostridium acetobutylicum (strain ATCC 824 / DSM 792 / JCM 1419 / IAM 19013 / LMG 5710 / NBRC 13948 / NRRL B-527 / VKM B-1787 / 2291 / W)).